Reading from the N-terminus, the 264-residue chain is Tropinone reductase homolog At5g06060 (264 aa).

15-39 (LVTGGTRGIGRAVVEELAKFGAKVH) contributes to the NADP(+) binding site. Ser-148 contributes to the substrate binding site. The active-site Proton acceptor is Tyr-161.

It belongs to the short-chain dehydrogenases/reductases (SDR) family. SDR65C subfamily.

The polypeptide is Tropinone reductase homolog At5g06060 (Arabidopsis thaliana (Mouse-ear cress)).